Here is a 330-residue protein sequence, read N- to C-terminus: Inactive hydroxysteroid dehydrogenase-like protein 1 (330 aa).

Position 2 is an N-acetylalanine (Ala-2). A required for mitochondria translocation region spans residues 2–82; it reads AAVDSFYLLY…SGATDGIGKA (81 aa). NADP(+) is bound by residues 74-80, Asp-125, and Lys-222; that span reads GATDGIG.

Belongs to the short-chain dehydrogenases/reductases (SDR) family. 17-beta-HSD 3 subfamily. In terms of assembly, interacts with STYXL1.

It localises to the mitochondrion. The sequence is that of Inactive hydroxysteroid dehydrogenase-like protein 1 (Hsdl1) from Mus musculus (Mouse).